Here is a 923-residue protein sequence, read N- to C-terminus: RNA polymerase-associated protein RapA (923 aa).

The Helicase ATP-binding domain maps to 162–332 (EVGNRVNPRV…FARLRLLDPE (171 aa)). Residue 175–182 (DEVGLGKT) participates in ATP binding. The DEAH box motif lies at 278 to 281 (DEAH). In terms of domain architecture, Helicase C-terminal spans 443-597 (KIDWLIDFLK…TCPMGMALFS (155 aa)).

It belongs to the SNF2/RAD54 helicase family. RapA subfamily. As to quaternary structure, interacts with the RNAP. Has a higher affinity for the core RNAP than for the holoenzyme. Its ATPase activity is stimulated by binding to RNAP.

Functionally, transcription regulator that activates transcription by stimulating RNA polymerase (RNAP) recycling in case of stress conditions such as supercoiled DNA or high salt concentrations. Probably acts by releasing the RNAP, when it is trapped or immobilized on tightly supercoiled DNA. Does not activate transcription on linear DNA. Probably not involved in DNA repair. This Haemophilus influenzae (strain PittEE) protein is RNA polymerase-associated protein RapA.